Reading from the N-terminus, the 206-residue chain is Small ribosomal subunit protein uS4 (206 aa).

The S4 RNA-binding domain occupies 96–156; the sequence is CRLDNVVYRM…EKSLNQLRIV (61 aa).

It belongs to the universal ribosomal protein uS4 family. In terms of assembly, part of the 30S ribosomal subunit. Contacts protein S5. The interaction surface between S4 and S5 is involved in control of translational fidelity.

One of the primary rRNA binding proteins, it binds directly to 16S rRNA where it nucleates assembly of the body of the 30S subunit. Its function is as follows. With S5 and S12 plays an important role in translational accuracy. In Pseudomonas entomophila (strain L48), this protein is Small ribosomal subunit protein uS4.